The primary structure comprises 529 residues: Peptide chain release factor 3 (529 aa).

A tr-type G domain is found at 11-280 (NKRRTFAIIS…GLVKWAPAPM (270 aa)). GTP-binding positions include 20-27 (SHPDAGKT), 88-92 (DTPGH), and 142-145 (NKLD).

It belongs to the TRAFAC class translation factor GTPase superfamily. Classic translation factor GTPase family. PrfC subfamily.

It localises to the cytoplasm. In terms of biological role, increases the formation of ribosomal termination complexes and stimulates activities of RF-1 and RF-2. It binds guanine nucleotides and has strong preference for UGA stop codons. It may interact directly with the ribosome. The stimulation of RF-1 and RF-2 is significantly reduced by GTP and GDP, but not by GMP. The protein is Peptide chain release factor 3 of Proteus mirabilis (strain HI4320).